The following is a 653-amino-acid chain: Fructose-1,6-bisphosphatase class 3 2 (653 aa).

It belongs to the FBPase class 3 family. It depends on Mn(2+) as a cofactor.

The catalysed reaction is beta-D-fructose 1,6-bisphosphate + H2O = beta-D-fructose 6-phosphate + phosphate. It functions in the pathway carbohydrate biosynthesis; gluconeogenesis. This chain is Fructose-1,6-bisphosphatase class 3 2, found in Clostridium beijerinckii (strain ATCC 51743 / NCIMB 8052) (Clostridium acetobutylicum).